The primary structure comprises 158 residues: SsrA-binding protein (158 aa).

Residues 136–151 (KRADSKSRDWARDKQR) show a composition bias toward basic and acidic residues. The tract at residues 136 to 158 (KRADSKSRDWARDKQRIMKHSTR) is disordered.

This sequence belongs to the SmpB family.

Its subcellular location is the cytoplasm. In terms of biological role, required for rescue of stalled ribosomes mediated by trans-translation. Binds to transfer-messenger RNA (tmRNA), required for stable association of tmRNA with ribosomes. tmRNA and SmpB together mimic tRNA shape, replacing the anticodon stem-loop with SmpB. tmRNA is encoded by the ssrA gene; the 2 termini fold to resemble tRNA(Ala) and it encodes a 'tag peptide', a short internal open reading frame. During trans-translation Ala-aminoacylated tmRNA acts like a tRNA, entering the A-site of stalled ribosomes, displacing the stalled mRNA. The ribosome then switches to translate the ORF on the tmRNA; the nascent peptide is terminated with the 'tag peptide' encoded by the tmRNA and targeted for degradation. The ribosome is freed to recommence translation, which seems to be the essential function of trans-translation. This chain is SsrA-binding protein, found in Photobacterium profundum (strain SS9).